We begin with the raw amino-acid sequence, 89 residues long: Omega-theraphotoxin-Ba1c (89 aa).

The first 23 residues, 1-23, serve as a signal peptide directing secretion; it reads MRSLTLAAVLACSLLLVFHTSAA. A propeptide spanning residues 24–50 is cleaved from the precursor; that stretch reads EEHEAQEGYLMNPGDTDTALATVDDER. Cystine bridges form between Cys54-Cys75, Cys58-Cys81, and Cys67-Cys86.

This sequence belongs to the neurotoxin 12 (Hwtx-2) family. 06 (TXP1) subfamily. As to expression, expressed by the venom gland.

It localises to the secreted. In terms of biological role, inhibits voltage-gated calcium channels (Cav) in rat cerebellar granule cells. Has insecticidal activity. This chain is Omega-theraphotoxin-Ba1c, found in Brachypelma albiceps (Mexican golden redrump tarantula).